The following is a 257-amino-acid chain: GTP cyclohydrolase FolE2 (257 aa).

It belongs to the GTP cyclohydrolase IV family.

It carries out the reaction GTP + H2O = 7,8-dihydroneopterin 3'-triphosphate + formate + H(+). Its pathway is cofactor biosynthesis; 7,8-dihydroneopterin triphosphate biosynthesis; 7,8-dihydroneopterin triphosphate from GTP: step 1/1. Converts GTP to 7,8-dihydroneopterin triphosphate. The sequence is that of GTP cyclohydrolase FolE2 from Dictyoglomus thermophilum (strain ATCC 35947 / DSM 3960 / H-6-12).